The following is an 846-amino-acid chain: Vinculin (846 aa).

The tract at residues 1 to 257 is interaction with TLN; that stretch reads MPVKFHTKTL…VLQLTTTFEE (257 aa). A coiled-coil region spans residues 315-370; sequence RAKLLAAADELDQILKELEELQAKGLGDSRQARALAHAAAVKLQELEQEIRKALAE. The disordered stretch occupies residues 617 to 646; sequence WVPPRPPLPELEEEEEPPELPPPPEDPASL.

This sequence belongs to the vinculin/alpha-catenin family. Monomer. Interacts with TLN (talin); the interaction facilitates VIN1 binding to F-actin. As to expression, expressed in epithelial tissues, specifically the pinacoderm (outer epithelium) and choanoderm (feeding epithelium) (at protein level). Also detected in migratory cells of the mesohyl (at protein level).

It is found in the cytoplasm. The protein resides in the cell cortex. Its subcellular location is the cell projection. The protein localises to the filopodium. It localises to the cytoskeleton. Functionally, actin filament (F-actin)-binding protein which may play a role in cell-cell adhesion. This Oscarella pearsei (Sponge) protein is Vinculin.